The following is a 277-amino-acid chain: Protein RKD3 (277 aa).

The RWP-RK domain maps to 142-226 (KRIIMKRRYR…LGNTKGRTPK (85 aa)). The stretch at 201–246 (RKLTSLNALIANLKDLLGNTKGRTPKSKLRNALELLEMEKKMIEEV) forms a coiled coil.

It localises to the nucleus. In terms of biological role, putative transcription factor. This Arabidopsis thaliana (Mouse-ear cress) protein is Protein RKD3 (RKD3).